The sequence spans 457 residues: Mannose-6-phosphate isomerase (457 aa).

Residues glutamine 108, histidine 110, glutamate 135, and histidine 292 each contribute to the Zn(2+) site. Arginine 311 is an active-site residue.

It belongs to the mannose-6-phosphate isomerase type 1 family. Requires Zn(2+) as cofactor.

The protein localises to the cytoplasm. The catalysed reaction is D-mannose 6-phosphate = D-fructose 6-phosphate. It functions in the pathway nucleotide-sugar biosynthesis; GDP-alpha-D-mannose biosynthesis; alpha-D-mannose 1-phosphate from D-fructose 6-phosphate: step 1/2. Involved in the synthesis of the GDP-mannose and dolichol-phosphate-mannose required for a number of critical mannosyl transfer reactions. This Aspergillus fumigatus (strain ATCC MYA-4609 / CBS 101355 / FGSC A1100 / Af293) (Neosartorya fumigata) protein is Mannose-6-phosphate isomerase (pmi1).